A 283-amino-acid polypeptide reads, in one-letter code: Adenylate dimethylallyltransferase (283 aa).

Belongs to the isopentenyl transferase family.

The enzyme catalyses dimethylallyl diphosphate + AMP = N(6)-(dimethylallyl)adenosine 5'-phosphate + diphosphate. Its function is as follows. Transfers dimethylallyl groups to AMP as part of the biosynthesis of cytokinin phytohormones like isopentenyl adenine or discadenine which controle spore formation and viability. This chain is Adenylate dimethylallyltransferase (iptA), found in Dictyostelium discoideum (Social amoeba).